The primary structure comprises 113 residues: Hydrogenase maturation factor HypA (113 aa).

Position 2 (His-2) interacts with Ni(2+). Zn(2+)-binding residues include Cys-73, Cys-76, Cys-89, and Cys-92.

Belongs to the HypA/HybF family.

Its function is as follows. Involved in the maturation of [NiFe] hydrogenases. Required for nickel insertion into the metal center of the hydrogenase. This Azorhizobium caulinodans (strain ATCC 43989 / DSM 5975 / JCM 20966 / LMG 6465 / NBRC 14845 / NCIMB 13405 / ORS 571) protein is Hydrogenase maturation factor HypA.